The chain runs to 162 residues: Caveolin-2 (162 aa).

At 1 to 86 (MGLETEKADV…FEISKYVMYK (86 aa)) the chain is on the cytoplasmic side. Tyrosine 19 is modified (phosphotyrosine; by SRC). Residues serine 20 and serine 23 each carry the phosphoserine modification. The residue at position 27 (tyrosine 27) is a Phosphotyrosine. The residue at position 36 (serine 36) is a Phosphoserine. The helical intramembrane region spans 87–107 (FLTVFLAIPLAFIAGILFATL). Residues 108–162 (SCLHIWILMPFVKTCLMVLPSVQTIWKSVTDVVIGPLCTSVGRSFSSVSMQLSHD) are Cytoplasmic-facing.

This sequence belongs to the caveolin family. As to quaternary structure, monomer or homodimer. Interacts with CAV1; the interaction forms a stable heterooligomeric complex that is required for targeting to lipid rafts and for caveolae formation. Tyrosine phosphorylated forms do not form heterooligomers with the Tyr-19-phosphorylated form existing as a monomer or dimer, and the Tyr-27-form as a monomer only. Interacts (tyrosine phosphorylated form) with the SH2 domain-containing proteins, RASA1, NCK1 and SRC. Interacts (tyrosine phosphorylated form) with INSR, the interaction (Tyr-27-phosphorylated form) is increased on insulin stimulation. Interacts (Tyr-19 phosphorylated form) with MAPK1 (phosphorylated form); the interaction, promoted by insulin, leads to nuclear location and MAPK1 activation. Interacts with STAT3; the interaction is increased on insulin-induced tyrosine phosphorylation leading to STAT activation. Post-translationally, phosphorylated on serine and tyrosine residues. CAV1 promotes phosphorylation on Ser-23 which then targets the complex to the plasma membrane, lipid rafts and caveolae. Phosphorylation on Ser-36 appears to modulate mitosis in endothelial cells. Phosphorylation on both Tyr-19 and Tyr-27 is required for insulin-induced 'Ser-727' phosphorylation of STAT3 and its activation. Phosphorylation on Tyr-19 is required for insulin-induced phosphorylation of MAPK1 and DNA binding of STAT3. Tyrosine phosphorylation is induced by both EGF and insulin.

The protein resides in the nucleus. It localises to the cytoplasm. Its subcellular location is the golgi apparatus membrane. The protein localises to the cell membrane. It is found in the membrane. The protein resides in the caveola. May act as a scaffolding protein within caveolar membranes. Interacts directly with G-protein alpha subunits and can functionally regulate their activity. Acts as an accessory protein in conjunction with CAV1 in targeting to lipid rafts and driving caveolae formation. The Ser-36 phosphorylated form has a role in modulating mitosis in endothelial cells. Positive regulator of cellular mitogenesis of the MAPK signaling pathway. Required for the insulin-stimulated nuclear translocation and activation of MAPK1 and STAT3, and the subsequent regulation of cell cycle progression. The polypeptide is Caveolin-2 (Cav2) (Mus musculus (Mouse)).